Reading from the N-terminus, the 188-residue chain is UPF0301 protein PsycPRwf_0144 (188 aa).

Belongs to the UPF0301 (AlgH) family.

This is UPF0301 protein PsycPRwf_0144 from Psychrobacter sp. (strain PRwf-1).